A 278-amino-acid polypeptide reads, in one-letter code: TnpB-like protein MJ0751 (278 aa).

Zn(2+) is bound by residues Cys222, Cys225, Cys239, and Cys242.

This sequence in the N-terminal section; belongs to the transposase 2 family. The protein in the C-terminal section; belongs to the transposase 35 family.

The sequence is that of TnpB-like protein MJ0751 from Methanocaldococcus jannaschii (strain ATCC 43067 / DSM 2661 / JAL-1 / JCM 10045 / NBRC 100440) (Methanococcus jannaschii).